A 281-amino-acid chain; its full sequence is Phytanoyl-CoA dioxygenase domain-containing protein 1 homolog (281 aa).

2-oxoglutarate contacts are provided by residues lysine 95, methionine 134, 149-151 (HQD), and tryptophan 166. Fe cation contacts are provided by histidine 149 and aspartate 151. Fe cation is bound at residue histidine 239. The 2-oxoglutarate site is built by serine 241 and arginine 250.

The protein belongs to the PhyH family. PHYHD1 subfamily. The cofactor is Fe cation.

Has alpha-ketoglutarate-dependent dioxygenase activity. Does not show detectable activity towards fatty acid CoA thioesters. Is not expected to be active with phytanoyl CoA. This chain is Phytanoyl-CoA dioxygenase domain-containing protein 1 homolog (phyhd1), found in Dictyostelium discoideum (Social amoeba).